A 538-amino-acid polypeptide reads, in one-letter code: Mevalonate kinase erg12 (538 aa).

The segment at 1-87 is disordered; sequence MGNPRGRRTN…RNMSRKPSSP (87 aa). Positions 9–29 are enriched in polar residues; the sequence is TNGSIKTSKGTQRGTVSNLLS. Positions 57–69 are enriched in low complexity; sequence TTPSTTESTLKTT. ATP-binding positions include K99, S231, and 236–242; that span reads GAGLGSS. Residues S242 and E287 each coordinate Mg(2+). D298 (proton acceptor) is an active-site residue.

It belongs to the GHMP kinase family. Mevalonate kinase subfamily. Homodimer. It depends on Mg(2+) as a cofactor.

The protein resides in the cytoplasm. It is found in the cytosol. The enzyme catalyses (R)-mevalonate + ATP = (R)-5-phosphomevalonate + ADP + H(+). The protein operates within isoprenoid biosynthesis; isopentenyl diphosphate biosynthesis via mevalonate pathway; isopentenyl diphosphate from (R)-mevalonate: step 1/3. In terms of biological role, mevalonate kinase; part of the second module of ergosterol biosynthesis pathway that includes the middle steps of the pathway. Erg12 converts mevalonate into 5-phosphomevalonate. The second module is carried out in the vacuole and involves the formation of farnesyl diphosphate, which is also an important intermediate in the biosynthesis of ubiquinone, dolichol, heme and prenylated proteins. Activity by the mevalonate kinase erg12 (AFUA_4G07780) first converts mevalonate into 5-phosphomevalonate. 5-phosphomevalonate is then further converted to 5-diphosphomevalonate by the phosphomevalonate kinase erg8 (AFUA_5G10680). The diphosphomevalonate decarboxylase mvd1 (AFUA_4G07130) then produces isopentenyl diphosphate. The isopentenyl-diphosphate delta-isomerase idi1 (AFUA_6G11160) then catalyzes the 1,3-allylic rearrangement of the homoallylic substrate isopentenyl (IPP) to its highly electrophilic allylic isomer, dimethylallyl diphosphate (DMAPP). Finally the farnesyl diphosphate synthase erg20 (AFUA_5G02450) catalyzes the sequential condensation of isopentenyl pyrophosphate with dimethylallyl pyrophosphate, and then with the resultant geranylpyrophosphate to the ultimate product farnesyl pyrophosphate. The protein is Mevalonate kinase erg12 of Aspergillus fumigatus (strain ATCC MYA-4609 / CBS 101355 / FGSC A1100 / Af293) (Neosartorya fumigata).